Here is a 352-residue protein sequence, read N- to C-terminus: Ferrochelatase (352 aa).

Residues histidine 222 and glutamate 303 each contribute to the Fe cation site.

The protein belongs to the ferrochelatase family.

The protein resides in the cytoplasm. It catalyses the reaction heme b + 2 H(+) = protoporphyrin IX + Fe(2+). Its pathway is porphyrin-containing compound metabolism; protoheme biosynthesis; protoheme from protoporphyrin-IX: step 1/1. In terms of biological role, catalyzes the ferrous insertion into protoporphyrin IX. The sequence is that of Ferrochelatase from Brucella abortus (strain S19).